Here is a 414-residue protein sequence, read N- to C-terminus: MNYIIKFLNKLNNLTVAIIILLAIALASALGTVIEQNKNTDFYLKNYPLTKPLFNFVTSDLILKFGLDHVYTSWWFIFLIILLLLSLTLCTITRQLPALKLARLWQFYTNFNTKAKFQIRFKTNSSSLTKLTYYLEEKNYKIKHFNHFVYAYKGIFGRVSPIIVHFSLVIVLIGSMLSTTQGRTQEAFIVVNQEKPVLDTYEAYVNDFKIAYNSQGLIDQFYSDLILETRQASKIQKTIYVNEPLNYSNITIYQTDWNIDNLVICIDNQNYYSIPLQFIELPNGSESKYWINRLDLFGQSVFCVVNDLTGIVYLYNQNKDLICISSLGEFITLNGHTITFNKLVASTGLQFKLDSFIPLVYLGFLLLMISTLLSYISYSQVWLVKNGSTTYIFGSTNRAKFAFIKQLTEIANQC.

Helical transmembrane passes span leucine 14–isoleucine 34, serine 73–threonine 93, and valine 159–threonine 179.

Belongs to the Ccs1/CcsB family. In terms of assembly, may interact with CcsA.

It is found in the plastid. It localises to the chloroplast thylakoid membrane. Required during biogenesis of c-type cytochromes (cytochrome c6 and cytochrome f) at the step of heme attachment. The sequence is that of Cytochrome c biogenesis protein Ccs1 from Guillardia theta (Cryptophyte).